Consider the following 1199-residue polypeptide: Putative pyruvate-flavodoxin oxidoreductase (1199 aa).

4Fe-4S ferredoxin-type domains are found at residues 681–710 (EIPV…GKVY) and 737–766 (FTIQ…QPRL). 12 residues coordinate [4Fe-4S] cluster: C690, C693, C696, C700, C746, C749, C752, C756, C820, C823, C848, and C1079.

The protein belongs to the pyruvate:ferredoxin/flavodoxin oxidoreductase family. [4Fe-4S] cluster serves as cofactor.

The catalysed reaction is oxidized [flavodoxin] + pyruvate + CoA + 2 H(+) = reduced [flavodoxin] + acetyl-CoA + CO2. Oxidoreductase required for the transfer of electrons from pyruvate to flavodoxin. The polypeptide is Putative pyruvate-flavodoxin oxidoreductase (nifJ) (Synechocystis sp. (strain ATCC 27184 / PCC 6803 / Kazusa)).